We begin with the raw amino-acid sequence, 282 residues long: NADPH-dependent 7-cyano-7-deazaguanine reductase (282 aa).

I90 to S92 provides a ligand contact to substrate. S92–K93 serves as a coordination point for NADPH. C190 (thioimide intermediate) is an active-site residue. D197 acts as the Proton donor in catalysis. H229 to E230 lines the substrate pocket. R258–G259 contacts NADPH.

The protein belongs to the GTP cyclohydrolase I family. QueF type 2 subfamily. Homodimer.

The protein localises to the cytoplasm. It catalyses the reaction 7-aminomethyl-7-carbaguanine + 2 NADP(+) = 7-cyano-7-deazaguanine + 2 NADPH + 3 H(+). The protein operates within tRNA modification; tRNA-queuosine biosynthesis. In terms of biological role, catalyzes the NADPH-dependent reduction of 7-cyano-7-deazaguanine (preQ0) to 7-aminomethyl-7-deazaguanine (preQ1). The protein is NADPH-dependent 7-cyano-7-deazaguanine reductase of Aeromonas salmonicida (strain A449).